A 284-amino-acid polypeptide reads, in one-letter code: 4-diphosphocytidyl-2-C-methyl-D-erythritol kinase (284 aa).

Lys-10 is an active-site residue. 92–102 is a binding site for ATP; that stretch reads PYGAGLGSGSS. Asp-134 is a catalytic residue.

This sequence belongs to the GHMP kinase family. IspE subfamily.

The catalysed reaction is 4-CDP-2-C-methyl-D-erythritol + ATP = 4-CDP-2-C-methyl-D-erythritol 2-phosphate + ADP + H(+). It functions in the pathway isoprenoid biosynthesis; isopentenyl diphosphate biosynthesis via DXP pathway; isopentenyl diphosphate from 1-deoxy-D-xylulose 5-phosphate: step 3/6. Catalyzes the phosphorylation of the position 2 hydroxy group of 4-diphosphocytidyl-2C-methyl-D-erythritol. This chain is 4-diphosphocytidyl-2-C-methyl-D-erythritol kinase, found in Salinibacter ruber (strain DSM 13855 / M31).